A 668-amino-acid polypeptide reads, in one-letter code: Eukaryotic translation initiation factor 3 subunit L (668 aa).

Positions 1–17 (MVADASQQGQSNGAAFN) are enriched in polar residues. Residues 1 to 42 (MVADASQQGQSNGAAFNQQQQYQQQQQRQLFGGEEEFGDEEE) are disordered. Low complexity predominate over residues 18 to 32 (QQQQYQQQQQRQLFG). Over residues 33–42 (GEEEFGDEEE) the composition is skewed to acidic residues. Positions 358–552 (SFTHILVFIM…QVVNTSDLDF (195 aa)) constitute a PCI domain. The disordered stretch occupies residues 625-668 (AGVKAGPPAFSQRSGGAGRSSVNKSAPAPAGAWGSSKPQPSVTA). Residues 648 to 662 (KSAPAPAGAWGSSKP) are compositionally biased toward low complexity.

Belongs to the eIF-3 subunit L family. As to quaternary structure, component of the eukaryotic translation initiation factor 3 (eIF-3) complex.

It localises to the cytoplasm. Its function is as follows. Component of the eukaryotic translation initiation factor 3 (eIF-3) complex, which is involved in protein synthesis of a specialized repertoire of mRNAs and, together with other initiation factors, stimulates binding of mRNA and methionyl-tRNAi to the 40S ribosome. The eIF-3 complex specifically targets and initiates translation of a subset of mRNAs involved in cell proliferation. The protein is Eukaryotic translation initiation factor 3 subunit L of Mycosarcoma maydis (Corn smut fungus).